Consider the following 109-residue polypeptide: UPF0060 membrane protein PA14_21660 (109 aa).

4 helical membrane-spanning segments follow: residues leucine 5–leucine 25, leucine 27–leucine 47, alanine 59–glutamate 79, and leucine 84–glycine 104.

This sequence belongs to the UPF0060 family.

Its subcellular location is the cell inner membrane. This chain is UPF0060 membrane protein PA14_21660, found in Pseudomonas aeruginosa (strain UCBPP-PA14).